We begin with the raw amino-acid sequence, 320 residues long: Lipoyl synthase (320 aa).

[4Fe-4S] cluster is bound by residues cysteine 67, cysteine 72, cysteine 78, cysteine 93, cysteine 97, cysteine 100, and serine 307. One can recognise a Radical SAM core domain in the interval 79–296 (FNHGTATFMI…RDKANEMGFE (218 aa)).

Belongs to the radical SAM superfamily. Lipoyl synthase family. The cofactor is [4Fe-4S] cluster.

It localises to the cytoplasm. The catalysed reaction is [[Fe-S] cluster scaffold protein carrying a second [4Fe-4S](2+) cluster] + N(6)-octanoyl-L-lysyl-[protein] + 2 oxidized [2Fe-2S]-[ferredoxin] + 2 S-adenosyl-L-methionine + 4 H(+) = [[Fe-S] cluster scaffold protein] + N(6)-[(R)-dihydrolipoyl]-L-lysyl-[protein] + 4 Fe(3+) + 2 hydrogen sulfide + 2 5'-deoxyadenosine + 2 L-methionine + 2 reduced [2Fe-2S]-[ferredoxin]. The protein operates within protein modification; protein lipoylation via endogenous pathway; protein N(6)-(lipoyl)lysine from octanoyl-[acyl-carrier-protein]: step 2/2. Its function is as follows. Catalyzes the radical-mediated insertion of two sulfur atoms into the C-6 and C-8 positions of the octanoyl moiety bound to the lipoyl domains of lipoate-dependent enzymes, thereby converting the octanoylated domains into lipoylated derivatives. The polypeptide is Lipoyl synthase (Haemophilus influenzae (strain 86-028NP)).